Reading from the N-terminus, the 425-residue chain is uncharacterized protein (425 aa).

The CHY-type zinc-finger motif lies at 135-202 (KEQEILGCSH…AAQYCKYCKN (68 aa)). Residues Cys-142, His-144, Cys-153, Cys-156, Cys-162, Cys-165, His-166, His-172, Cys-184, Cys-187, Cys-197, Cys-200, Cys-209, Cys-212, His-225, Cys-226, Cys-229, Cys-232, His-244, Cys-245, Cys-248, Cys-251, His-260, and Cys-262 each contribute to the Zn(2+) site. The segment at 204–270 (MGRYYCNKCK…RCIERSTDCN (67 aa)) adopts a CTCHY-type zinc-finger fold. The RING-type; atypical zinc-finger motif lies at 271 to 313 (CPICGEYMFNSRERVIFLSCSHPLHQRCHEEYIRTNYRCPTCY).

This is an uncharacterized protein from Schizosaccharomyces pombe (strain 972 / ATCC 24843) (Fission yeast).